A 416-amino-acid chain; its full sequence is S-adenosylmethionine synthase (416 aa).

His-16 provides a ligand contact to ATP. A Mg(2+)-binding site is contributed by Asp-18. Glu-44 contributes to the K(+) binding site. L-methionine contacts are provided by Glu-57 and Gln-100. Positions 100-110 are flexible loop; the sequence is QSPDISQGVTA. ATP is bound by residues 175–177, 251–252, Asp-260, 266–267, Ala-283, and Lys-287; these read DGK, KF, and RK. L-methionine is bound at residue Asp-260. Residue Lys-291 participates in L-methionine binding.

This sequence belongs to the AdoMet synthase family. As to quaternary structure, homotetramer; dimer of dimers. Mg(2+) serves as cofactor. It depends on K(+) as a cofactor.

It is found in the cytoplasm. The catalysed reaction is L-methionine + ATP + H2O = S-adenosyl-L-methionine + phosphate + diphosphate. The protein operates within amino-acid biosynthesis; S-adenosyl-L-methionine biosynthesis; S-adenosyl-L-methionine from L-methionine: step 1/1. Its function is as follows. Catalyzes the formation of S-adenosylmethionine (AdoMet) from methionine and ATP. The overall synthetic reaction is composed of two sequential steps, AdoMet formation and the subsequent tripolyphosphate hydrolysis which occurs prior to release of AdoMet from the enzyme. The polypeptide is S-adenosylmethionine synthase (Microcystis aeruginosa (strain NIES-843 / IAM M-2473)).